Reading from the N-terminus, the 563-residue chain is CTP synthase (563 aa).

The interval 1–278 (MAKATAKNSA…DLRVLEQLHL (278 aa)) is amidoligase domain. Residue Ser-24 coordinates CTP. Ser-24 is a binding site for UTP. 25–30 (SLGKGI) contributes to the ATP binding site. Tyr-65 is an L-glutamine binding site. Asp-82 is an ATP binding site. Positions 82 and 151 each coordinate Mg(2+). CTP contacts are provided by residues 158–160 (DIE), 198–203 (KTKPSQ), and Lys-234. UTP is bound by residues 198–203 (KTKPSQ) and Lys-234. 250–252 (KDV) contacts ATP. The region spanning 303–545 (TIALVGKYIA…VKAALEQKKA (243 aa)) is the Glutamine amidotransferase type-1 domain. Residue Gly-363 coordinates L-glutamine. Cys-390 functions as the Nucleophile; for glutamine hydrolysis in the catalytic mechanism. L-glutamine is bound by residues 391–394 (LGMQ), Glu-414, and Arg-471. Residues His-518 and Glu-520 contribute to the active site. The interval 542-563 (QKKANGKKPTAPSEKTKKTKTK) is disordered.

The protein belongs to the CTP synthase family. Homotetramer.

It carries out the reaction UTP + L-glutamine + ATP + H2O = CTP + L-glutamate + ADP + phosphate + 2 H(+). The enzyme catalyses L-glutamine + H2O = L-glutamate + NH4(+). It catalyses the reaction UTP + NH4(+) + ATP = CTP + ADP + phosphate + 2 H(+). It participates in pyrimidine metabolism; CTP biosynthesis via de novo pathway; CTP from UDP: step 2/2. Its activity is regulated as follows. Allosterically activated by GTP, when glutamine is the substrate; GTP has no effect on the reaction when ammonia is the substrate. The allosteric effector GTP functions by stabilizing the protein conformation that binds the tetrahedral intermediate(s) formed during glutamine hydrolysis. Inhibited by the product CTP, via allosteric rather than competitive inhibition. Its function is as follows. Catalyzes the ATP-dependent amination of UTP to CTP with either L-glutamine or ammonia as the source of nitrogen. Regulates intracellular CTP levels through interactions with the four ribonucleotide triphosphates. This chain is CTP synthase, found in Fibrobacter succinogenes (strain ATCC 19169 / S85).